The primary structure comprises 135 residues: MAENIFLEVVTPGASVVSEEAQIVMAPGSEGEFGVLRGHTTFLTSLKIGSLRYKDAAGKERVLFVNGGFAEVLPTKVTVLAESAERRSQIEVERVRAAKARAEKRISERSVGIDILRAEAALRRAIQRLSVIETR.

It belongs to the ATPase epsilon chain family. In terms of assembly, F-type ATPases have 2 components, CF(1) - the catalytic core - and CF(0) - the membrane proton channel. CF(1) has five subunits: alpha(3), beta(3), gamma(1), delta(1), epsilon(1). CF(0) has three main subunits: a, b and c.

The protein localises to the cell inner membrane. Functionally, produces ATP from ADP in the presence of a proton gradient across the membrane. The sequence is that of ATP synthase epsilon chain from Desulforapulum autotrophicum (strain ATCC 43914 / DSM 3382 / VKM B-1955 / HRM2) (Desulfobacterium autotrophicum).